The sequence spans 1251 residues: Cyclic nucleotide-gated channel beta-1 (1251 aa).

4 disordered regions span residues 1-75 (MLGW…QETK), 121-151 (ITEDPAQILGHGSTGDTGCTDEPNEALEAQD), 172-252 (QPPK…TRDP), and 314-561 (EDAH…STNS). The Cytoplasmic segment spans residues 1-656 (MLGWVQRVLP…SIDPLTNLMY (656 aa)). Positions 23–50 (EEEEVEPEPEMEAEVEPEPNPEEAETES) are enriched in acidic residues. The span at 238 to 247 (GSQAQTSSLP) shows a compositional bias: polar residues. Over residues 335 to 352 (EENKAVEKMPRELSRIEE) the composition is skewed to basic and acidic residues. Acidic residues predominate over residues 353–373 (EKEDEEEEEEEEEEEEEEEVT). Positions 404 to 423 (KLWEEVGEEAKKEAEEKAKE) are enriched in basic and acidic residues. Positions 424-434 (EAEEVAEEEAE) are enriched in acidic residues. The span at 435 to 446 (KEPQDWAETKEE) shows a compositional bias: basic and acidic residues. The tract at residues 557–567 (ASTNSAIINDR) is calmodulin-binding CaM1. An IQ-like motif is present at residues 568–578 (LQELVKLFKER). The segment at 585–619 (KLIDPDVTSDEESPKPSPAKKAPEPAPDTKPAEAE) is disordered. Residues 657-678 (VLWLFFVVMAWNWNCWLIPVRW) traverse the membrane as a helical segment. Topologically, residues 679-687 (AFPYQTPDN) are extracellular. Residues 688–709 (IHHWLLMDYLCDLIYFLDITVF) traverse the membrane as a helical segment. Residues 710–724 (QTRLQFVRGGDIITD) are Cytoplasmic-facing. Residues 725–744 (KKDMRNNYLKSRRFKMDLLS) form a helical membrane-spanning segment. Residues 745 to 760 (LLPLDFLYLKVGVNPL) are Extracellular-facing. The chain crosses the membrane as a helical span at residues 761 to 773 (LRLPRCLKYMAFF). Residues 774 to 785 (EFNSRLESILSK) are Cytoplasmic-facing. Residues 786-808 (AYVYRVIRTTAYLLYSLHLNSCL) form a helical membrane-spanning segment. An ion conduction pathway region spans residues 786 to 885 (AYVYRVIRTT…IGQMRDVVGA (100 aa)). Over 809 to 831 (YYWASAYQGLGSTHWVYDGVGNS) the chain is Extracellular. A run of 2 helical transmembrane segments spans residues 832–858 (YIRCYYFAVKTLITIGGLPDPKTLFEI) and 859–884 (VFQLLNYFTGVFAFSVMIGQMRDVVG). The Cytoplasmic portion of the chain corresponds to 885 to 1251 (AATAGQTYYR…MPEEREEKAE (367 aa)). The tract at residues 888-964 (AGQTYYRSCM…NIVSKVALFQ (77 aa)) is C-linker. The segment at 968 to 1084 (RQMIFDMLKR…LLRKKARRML (117 aa)) is cyclic nucleotide-binding domain. Residues Gly-1029, Glu-1030, Ser-1032, Arg-1042, and Thr-1043 each contribute to the 3',5'-cyclic GMP site. Residue Arg-1042 participates in 3',5'-cyclic AMP binding. Residues 1148 to 1154 (QQELVEQ) are calmodulin-binding CaM2. Positions 1151–1251 (LVEQAKSSQD…MPEEREEKAE (101 aa)) are disordered. Pro residues predominate over residues 1183–1203 (PPAPRTPPEPPGSPPSSPPPA). Positions 1242–1251 (MPEEREEKAE) are enriched in basic and acidic residues.

This sequence belongs to the cyclic nucleotide-gated cation channel (TC 1.A.1.5) family. CNGB1 subfamily. As to quaternary structure, the rod cyclic nucleotide-gated channel is a heterotetramer composed of CNGA1 and CNGB1 subunits with 3:1 stoichiometry. CNGA1:CNGB1 channel binds Ca(2+)-bound CALM1 via CaM1 and CaM2 regions of the CNGB1 subunit; this interaction modulates the affinity of the channel for cNMPs in response to intracellular Ca(2+) levels. The olfactory cyclic nucleotide-gated channel is a heterotetramer composed of CNGA2, CNGA4 and CNGB1 subunits with 2:1:1 stoichiometry.

It is found in the cell membrane. Its subcellular location is the cell projection. The protein localises to the cilium membrane. It catalyses the reaction Ca(2+)(in) = Ca(2+)(out). It carries out the reaction Na(+)(in) = Na(+)(out). The catalysed reaction is K(+)(in) = K(+)(out). The enzyme catalyses NH4(+)(in) = NH4(+)(out). It catalyses the reaction Rb(+)(in) = Rb(+)(out). It carries out the reaction Li(+)(in) = Li(+)(out). The catalysed reaction is Cs(+)(in) = Cs(+)(out). Pore-forming subunit of the rod cyclic nucleotide-gated channel. Mediates rod photoresponses at dim light converting transient changes in intracellular cGMP levels into electrical signals. In the dark, cGMP levels are high and keep the channel open enabling a steady inward current carried by Na(+) and Ca(2+) ions that leads to membrane depolarization and neurotransmitter release from synaptic terminals. Upon photon absorption cGMP levels decline leading to channel closure and membrane hyperpolarization that ultimately slows neurotransmitter release and signals the presence of light, the end point of the phototransduction cascade. Pore-forming subunit of the olfactory cyclic nucleotide-gated channel. Operates in the cilia of olfactory sensory neurons where chemical stimulation of the odorant is converted to an electrical signal. Mediates odorant-induced cAMP-dependent Ca(2+) influx triggering neuron depolarization. The rise of intracellular Ca(2+) levels potentiates the olfactory response by activating Ca(2+)-dependent Cl(-) channels, but it also serves as a negative feedback signal to desensitize the channel for rapid adaptation to odorants. Conducts cGMP- and cAMP-gated ion currents, with permeability for monovalent and divalent cations. The selectivity for Ca(2+) over Na(+) increases with cGMP concentrations, whereas the selectivity among monovalent ions is independent of the cGMP levels. In terms of biological role, high affinity rod photoreceptor phosphodiesterase (PDE6)-binding protein that modulates its catalytic properties: it is a regulator of spontaneous activation of rod PDE6, thereby serving to lower rod photoreceptor 'dark noise' and allowing these sensory cells to operate at the single photon detection limit. In Homo sapiens (Human), this protein is Cyclic nucleotide-gated channel beta-1.